Consider the following 211-residue polypeptide: Potassium-transporting ATPase KdpC subunit (211 aa).

Residues 13 to 35 traverse the membrane as a helical segment; that stretch reads VVTMVLTGLLYPLAVTGLAQLLF.

Belongs to the KdpC family. The system is composed of three essential subunits: KdpA, KdpB and KdpC.

The protein localises to the cell membrane. Its function is as follows. Part of the high-affinity ATP-driven potassium transport (or Kdp) system, which catalyzes the hydrolysis of ATP coupled with the electrogenic transport of potassium into the cytoplasm. This subunit acts as a catalytic chaperone that increases the ATP-binding affinity of the ATP-hydrolyzing subunit KdpB by the formation of a transient KdpB/KdpC/ATP ternary complex. This Myxococcus xanthus protein is Potassium-transporting ATPase KdpC subunit.